We begin with the raw amino-acid sequence, 30 residues long: Basic phospholipase A2 CM-I (30 aa).

It belongs to the phospholipase A2 family. Group I subfamily. The cofactor is Ca(2+). As to expression, expressed by the venom gland.

It is found in the secreted. The enzyme catalyses a 1,2-diacyl-sn-glycero-3-phosphocholine + H2O = a 1-acyl-sn-glycero-3-phosphocholine + a fatty acid + H(+). In terms of biological role, snake venom phospholipase A2 (PLA2) that shows weak anticoagulant activity. Is more catalytically active than the strong anticoagulant protein CM-IV found in this venom. Acts by inhibiting the complex composed of tissue factor (F3) and coagulation factor VIIa (F7) (TF-VIIa complex) by only enzymatic mechanism. PLA2 catalyzes the calcium-dependent hydrolysis of the 2-acyl groups in 3-sn-phosphoglycerides. In Naja nigricollis (Black-necked spitting cobra), this protein is Basic phospholipase A2 CM-I.